The sequence spans 397 residues: UPF0761 membrane protein Kkor_1635 (397 aa).

A run of 6 helical transmembrane segments spans residues 36–56 (MLAL…FPSF), 92–112 (NLSA…MRSI), 132–152 (ILAY…SLAA), 168–188 (ILTF…LYMV), 201–221 (IAAV…AIFV), and 237–257 (IPIF…GVIV).

It belongs to the UPF0761 family.

The protein localises to the cell inner membrane. This Kangiella koreensis (strain DSM 16069 / JCM 12317 / KCTC 12182 / SW-125) protein is UPF0761 membrane protein Kkor_1635.